We begin with the raw amino-acid sequence, 557 residues long: MMFCYQCEQTTRSPAGIGCTSEPGTCGKDEATAGLQDILTHLMKGIAQYARRARAMGVADRRTDDFIFYGLFTTLTNVNFTATRFVHLIQEASKRRERIKLLYEEAAREQGKTPEILSGPALFQPADSLEQLLRQAPSVAINADVEHLGSDVIGARALILYGMKGVAAYAQHARVLGYQSDEVDAQAEEILDYLASNPTDLDEMLEESLEVGRLNLKVMELLDVANTDSFGAQEITSVRISPIQGKAILVSGHDLHDLKQILEQTKDQGINVYTHGEMLPANAYPLLKAYPHLAGNLGGAWQDQQREFADFPGPIVMTSNCIIEPGRSYKNRIFTLGPVGWPGVRHIDNGDFTPVIQAAKALPGFTADAKEQRITIGFGHHTLLGVADKIVDAVKHGDIRHFFLVGGCDGVSPARNYFTEVADNAPADSVVMTLGCGKYRFNKHEFGDIGGIPRLLDIGQCNDAHSAIRVAGALAEAFNCGVNDLPLSIMLSWFEQKATAIHLSLLALGIKGIKLGPTLPAYLTPTLVQKLQSRFDLDLDLIGEAQADLQTALAHTA.

Cys4, Cys7, Cys19, and Cys26 together coordinate [4Fe-4S] cluster. His253, Glu277, Cys321, Cys408, Cys436, Cys461, Glu495, and Lys497 together coordinate hybrid [4Fe-2O-2S] cluster. Cys408 is subject to Cysteine persulfide.

Belongs to the HCP family. The cofactor is [4Fe-4S] cluster. It depends on hybrid [4Fe-2O-2S] cluster as a cofactor.

The protein localises to the cytoplasm. It carries out the reaction A + NH4(+) + H2O = hydroxylamine + AH2 + H(+). Catalyzes the reduction of hydroxylamine to form NH(3) and H(2)O. In Acidithiobacillus ferrooxidans (strain ATCC 53993 / BNL-5-31) (Leptospirillum ferrooxidans (ATCC 53993)), this protein is Hydroxylamine reductase.